The following is a 56-amino-acid chain: Large ribosomal subunit protein bL32 (56 aa).

The protein belongs to the bacterial ribosomal protein bL32 family.

This chain is Large ribosomal subunit protein bL32, found in Prochlorococcus marinus (strain MIT 9215).